A 160-amino-acid chain; its full sequence is MGVFNYESETTSVIPAARLFKAFILEGDTLIPKVAPQAISSVENIEGNGGPGTIKKITFPEGSPFKYVKERVDEVDHANFKYSYSMIEGGALGDTLEKICNEIKIVATPDGGSILKISNKYHTKGDQEMKAEHMKAIKEKGEALLRAVESYLLAHSDAYN.

Brassinolide contacts are provided by lysine 55, tyrosine 82, tyrosine 84, and asparagine 101.

Belongs to the BetVI family.

Its subcellular location is the cytoplasm. Its function is as follows. May be a general steroid carrier protein. This is Major pollen allergen Bet v 1-C (BETV1C) from Betula pendula (European white birch).